Consider the following 89-residue polypeptide: METPLDLLKLNLDERVYIKLRGARTLVGTLQAFDSHCNIVLSDAVETIYQLNNEELSESERRCEMVFIRGDTVTLISTPSEDDDGAVEI.

One can recognise a Sm domain in the interval 3–82; sequence TPLDLLKLNL…VTLISTPSED (80 aa).

It belongs to the snRNP Sm proteins family. As to quaternary structure, component of the heptameric LSM1-LSM7 complex that forms a seven-membered ring structure with a donut shape. The LSm subunits are arranged in the order LSM1, LSM2, LSM3, LSM6, LSM5, LSM7 and LSM4. Except for LSM1, where a C-terminal helix crosses the ring structure to form additional interactions with LSM3 and LSM6, each subunit interacts only with its two neighboring subunits. The LSM1-LSM7 complex interacts with PAT1; within the complex PAT1 has direct interactions with LSM2 and LSM3. The LSM1-LSM7 complex interacts with XRN1. Component of the heptameric LSM2-LSM8 complex that forms a seven-membered ring structure with a donut shape; an RNA strand can pass through the hole in the center of the ring structure. The LSm subunits are arranged in the order LSM8, LSM2, LSM3, LSM6, LSM5, LSM7 and LSM4. Component of the spliceosome U4/U6-U5 tri-snRNP complex composed of the U4, U6 and U5 snRNAs and at least PRP3, PRP4, PRP6, PRP8, PRP18, PRP31, PRP38, SNU13, SNU23, SNU66, SNU114, SPP381, SMB1, SMD1, SMD2, SMD3, SMX2, SMX3, LSM2, LSM3, LSM4, LSM5, LSM6, LSM7, LSM8, BRR2 and DIB1. May be found in a complex comprising LSM2-LSM7 without LSM1 or LSM8; the complex associates with pre-P RNA and snoRNA SNR5.

It is found in the nucleus. The protein resides in the nucleolus. It localises to the cytoplasm. In terms of biological role, component of LSm protein complexes, which are involved in RNA processing and may function in a chaperone-like manner. Component of the cytoplasmic LSM1-LSM7 complex which is involved in mRNA degradation by activating the decapping step. Together with PAT1, the LSM1-LSM7 complex binds to osmotic stress-activated mRNAs to attenuate the osmotic stress response, probably by limiting ribosome access to the mRNA and consequently translation. Component of the nuclear LSM2-LSM8 complex, which is involved in spliceosome assembly. The LSM2-LSM8 complex plays a role in the biogenesis of the spliceosomal U4/U6-U5 tri-snRNP complex by accelerating PRP24-mediated annealing of U4/U6 di-snRNA. The LSM2-LSM8 complex binds U6 snRNA terminating with a non-cyclic 3' phosphate group. LSM2-LSM8 is probably also involved in degradation of nuclear pre-mRNA by targeting them for decapping. LSM2-LSM8 could be involved in processing of pre-tRNAs, pre-rRNAs and U3 snoRNA, although involvement may be indirect. In a complex that probably contains LSM2-LSM7, but not LSM1 or LSM8, associates with the precursor of the RNA component of RNase P (pre-P RNA) and may be involved in maturing pre-P RNA; the complex also associates with snoRNA SNR5. The chain is LSM complex subunit LSM3 (LSM3) from Saccharomyces cerevisiae (strain ATCC 204508 / S288c) (Baker's yeast).